A 314-amino-acid polypeptide reads, in one-letter code: Hydroxyethylthiazole kinase (314 aa).

M70 lines the substrate pocket. The ATP site is built by R145 and S217. G244 serves as a coordination point for substrate.

The protein belongs to the Thz kinase family. It depends on Mg(2+) as a cofactor.

The enzyme catalyses 5-(2-hydroxyethyl)-4-methylthiazole + ATP = 4-methyl-5-(2-phosphooxyethyl)-thiazole + ADP + H(+). It participates in cofactor biosynthesis; thiamine diphosphate biosynthesis; 4-methyl-5-(2-phosphoethyl)-thiazole from 5-(2-hydroxyethyl)-4-methylthiazole: step 1/1. In terms of biological role, catalyzes the phosphorylation of the hydroxyl group of 4-methyl-5-beta-hydroxyethylthiazole (THZ). The chain is Hydroxyethylthiazole kinase from Bifidobacterium longum (strain NCC 2705).